We begin with the raw amino-acid sequence, 312 residues long: Ribonuclease Z (312 aa).

Residues His63, His65, Asp67, His68, His141, Asp212, and His270 each coordinate Zn(2+). Residue Asp67 is the Proton acceptor of the active site.

This sequence belongs to the RNase Z family. Homodimer. The cofactor is Zn(2+).

It catalyses the reaction Endonucleolytic cleavage of RNA, removing extra 3' nucleotides from tRNA precursor, generating 3' termini of tRNAs. A 3'-hydroxy group is left at the tRNA terminus and a 5'-phosphoryl group is left at the trailer molecule.. In terms of biological role, zinc phosphodiesterase, which displays some tRNA 3'-processing endonuclease activity. Probably involved in tRNA maturation, by removing a 3'-trailer from precursor tRNA. This Lactobacillus helveticus (strain DPC 4571) protein is Ribonuclease Z.